Here is a 413-residue protein sequence, read N- to C-terminus: 2,3-diketo-5-methylthiopentyl-1-phosphate enolase (413 aa).

Lys98 acts as the Proton acceptor in catalysis. Residues Lys147, 173 to 176 (KDDE), His264, Gly337, and 359 to 360 (GG) each bind substrate. Mg(2+) is bound by residues Lys173, Asp175, and Glu176. Lys173 is modified (N6-carboxylysine).

It belongs to the RuBisCO large chain family. Type IV subfamily. In terms of assembly, homodimer. Mg(2+) serves as cofactor.

The catalysed reaction is 5-methylsulfanyl-2,3-dioxopentyl phosphate = 2-hydroxy-5-methylsulfanyl-3-oxopent-1-enyl phosphate. It functions in the pathway amino-acid biosynthesis; L-methionine biosynthesis via salvage pathway; L-methionine from S-methyl-5-thio-alpha-D-ribose 1-phosphate: step 3/6. Functionally, catalyzes the enolization of 2,3-diketo-5-methylthiopentyl-1-phosphate (DK-MTP-1-P) into 2-hydroxy-3-keto-5-methylthiopentenyl-1-phosphate (HK-MTPenyl-1-P). This is 2,3-diketo-5-methylthiopentyl-1-phosphate enolase (mtnW) from Geobacillus kaustophilus (strain HTA426).